Here is a 301-residue protein sequence, read N- to C-terminus: MVRADRDRWDLATSVGATATMVAAQRALAADPRYALIDDPYAAPLVRAVGMDVYTRLVDWQIPVEGDSEFDPQRMATGMACRTRFFDQFFLDATHSGIGQFVILASGLDARAYRLAWPVGSIVYEVDMPEVIEFKTATLSDLGAEPATERRTVAVDLRDDWATALQTAGFDPKVPAAWSAEGLLVYLPVEAQDALFDNITALSAPGSRLAFEFVPDTAIFADERWRNYHNRMSELGFDIDLNELVYHGQRGHVLDYLTRDGWQTSALTVTQLYEANGFAYPDDELATAFADLTYSSATLMR.

S-adenosyl-L-methionine is bound by residues Asp127 and 156-157; that span reads DL.

It belongs to the UPF0677 family.

In terms of biological role, exhibits S-adenosyl-L-methionine-dependent methyltransferase activity. This chain is Putative S-adenosyl-L-methionine-dependent methyltransferase MT0851, found in Mycobacterium tuberculosis (strain CDC 1551 / Oshkosh).